The sequence spans 231 residues: Ribose-5-phosphate isomerase A (231 aa).

Residues 28–31 (TGST), 83–86 (DGAD), and 96–99 (KGGG) each bind substrate. The Proton acceptor role is filled by Glu-105. Position 123 (Lys-123) interacts with substrate.

This sequence belongs to the ribose 5-phosphate isomerase family. Homodimer.

The enzyme catalyses aldehydo-D-ribose 5-phosphate = D-ribulose 5-phosphate. It functions in the pathway carbohydrate degradation; pentose phosphate pathway; D-ribose 5-phosphate from D-ribulose 5-phosphate (non-oxidative stage): step 1/1. In terms of biological role, catalyzes the reversible conversion of ribose-5-phosphate to ribulose 5-phosphate. This Agrobacterium fabrum (strain C58 / ATCC 33970) (Agrobacterium tumefaciens (strain C58)) protein is Ribose-5-phosphate isomerase A.